The following is a 205-amino-acid chain: Imidazole glycerol phosphate synthase subunit HisH (205 aa).

A Glutamine amidotransferase type-1 domain is found at 1–205; the sequence is MIALVDYGGG…FFKMALGDKK (205 aa). Catalysis depends on C79, which acts as the Nucleophile. Catalysis depends on residues H181 and E183.

Heterodimer of HisH and HisF.

It localises to the cytoplasm. It carries out the reaction 5-[(5-phospho-1-deoxy-D-ribulos-1-ylimino)methylamino]-1-(5-phospho-beta-D-ribosyl)imidazole-4-carboxamide + L-glutamine = D-erythro-1-(imidazol-4-yl)glycerol 3-phosphate + 5-amino-1-(5-phospho-beta-D-ribosyl)imidazole-4-carboxamide + L-glutamate + H(+). The catalysed reaction is L-glutamine + H2O = L-glutamate + NH4(+). The protein operates within amino-acid biosynthesis; L-histidine biosynthesis; L-histidine from 5-phospho-alpha-D-ribose 1-diphosphate: step 5/9. Its function is as follows. IGPS catalyzes the conversion of PRFAR and glutamine to IGP, AICAR and glutamate. The HisH subunit catalyzes the hydrolysis of glutamine to glutamate and ammonia as part of the synthesis of IGP and AICAR. The resulting ammonia molecule is channeled to the active site of HisF. This is Imidazole glycerol phosphate synthase subunit HisH from Dehalococcoides mccartyi (strain CBDB1).